Here is a 123-residue protein sequence, read N- to C-terminus: Periplasmic [Fe] hydrogenase small subunit (123 aa).

Residues 1-34 (MQIASITRRGFLKVACVTTGAALIGIRMTGKAVA) constitute a signal peptide (tat-type signal). The segment at 103-123 (TTAGKLPNPRASEFEGPYPYE) is disordered.

In terms of assembly, heterodimer of a large and a small subunit. Predicted to be exported by the Tat system. The position of the signal peptide cleavage has been experimentally proven.

It localises to the periplasm. The enzyme catalyses H2 + 2 oxidized [2Fe-2S]-[ferredoxin] = 2 reduced [2Fe-2S]-[ferredoxin] + 2 H(+). Its function is as follows. May be involved in hydrogen uptake for the reduction of sulfate to hydrogen sulfide in an electron transport chain. Cytochrome c3 is likely to be the physiological electron carrier for the enzyme. This is Periplasmic [Fe] hydrogenase small subunit (hydB) from Nitratidesulfovibrio vulgaris (strain ATCC 29579 / DSM 644 / CCUG 34227 / NCIMB 8303 / VKM B-1760 / Hildenborough) (Desulfovibrio vulgaris).